Consider the following 484-residue polypeptide: Proline--tRNA ligase (484 aa).

The protein belongs to the class-II aminoacyl-tRNA synthetase family. ProS type 3 subfamily. Homodimer.

The protein localises to the cytoplasm. The enzyme catalyses tRNA(Pro) + L-proline + ATP = L-prolyl-tRNA(Pro) + AMP + diphosphate. Functionally, catalyzes the attachment of proline to tRNA(Pro) in a two-step reaction: proline is first activated by ATP to form Pro-AMP and then transferred to the acceptor end of tRNA(Pro). This chain is Proline--tRNA ligase, found in Haloarcula marismortui (strain ATCC 43049 / DSM 3752 / JCM 8966 / VKM B-1809) (Halobacterium marismortui).